Reading from the N-terminus, the 399-residue chain is Transcription factor UNE10 (399 aa).

Disordered regions lie at residues 119 to 158 (QSKP…GSQR) and 173 to 228 (MGSH…RRDK). The segment covering 178 to 201 (NTIDDHDSVCHSRPQMEDEEEKKA) has biased composition (basic and acidic residues). Positions 213 to 262 (RAAAIHNQSERKRRDKINQRMKTLQKLVPNSSKTDKASMLDEVIEYLKQL) constitute a bHLH domain.

Homodimer. Associates to PTAC12/HMR/PAP5 which acts as a transcriptional coactivator. Interacts with the Pfr form of phyB but barely with that of phyA. Binds to COP1. Post-translationally, ubiquitinated and subsequently targeted to protein degradation by COP1 in the dark, but not in far-red light. Mainly expressed in stems, leaves, seedlings, fruits and flowers, and, to a lower extent, in roots.

Its subcellular location is the nucleus. With respect to regulation, stabilized by phyA but destabilized by phyB. Accumulates in the dark but not in far-red light upon MG132 treatment, a 26S proteasome inhibitor (at protein level). In terms of biological role, transcription factor binding to G-box elements (5'-CACGTG-3') in target genes promoters, particularly in far-red light but barely in the dark. Required during the fertilization of ovules by pollen. Repressor of phytochrome A-mediated far-red light responses including seed germination, suppression of hypocotyl elongation, and randomization of hypocotyl growth orientation. Does not inhibit phyB-induced red light responses. The protein is Transcription factor UNE10 of Arabidopsis thaliana (Mouse-ear cress).